The primary structure comprises 133 residues: Small ribosomal subunit protein uS9 (133 aa).

The disordered stretch occupies residues 97–133 (MKQELKSQGFLTRDPRKKERKKYGRKKARKSFQFSKR). Basic residues predominate over residues 114 to 133 (KERKKYGRKKARKSFQFSKR).

Belongs to the universal ribosomal protein uS9 family.

The sequence is that of Small ribosomal subunit protein uS9 (rpsI) from Chlamydia muridarum (strain MoPn / Nigg).